The primary structure comprises 391 residues: Chalcone synthase 2 (391 aa).

The active site involves Cys164.

It belongs to the thiolase-like superfamily. Chalcone/stilbene synthases family.

The enzyme catalyses (E)-4-coumaroyl-CoA + 3 malonyl-CoA + 3 H(+) = 2',4,4',6'-tetrahydroxychalcone + 3 CO2 + 4 CoA. It participates in secondary metabolite biosynthesis; flavonoid biosynthesis. In terms of biological role, the primary product of this enzyme is 4,2',4',6'-tetrahydroxychalcone (also termed naringenin-chalcone or chalcone) which can under specific conditions spontaneously isomerize into naringenin. The chain is Chalcone synthase 2 (CHS2) from Citrus sinensis (Sweet orange).